We begin with the raw amino-acid sequence, 591 residues long: Metalloendopeptidase OPG085 (591 aa).

His41 serves as a coordination point for Zn(2+). Glu44 is a catalytic residue. Zn(2+) contacts are provided by His45 and Glu112.

This sequence belongs to the peptidase M44 family. Requires Zn(2+) as cofactor. Post-translationally, undergoes proteolytic processing during the course of infection. May be cleaved into 46 kDa and 22 kDa products (Potential).

It is found in the virion. Functionally, probably involved in maturation of some viral proteins by processing them preferentially at Ala-Gly-|-Ser/Thr/Lys motifs. Does not seem to be responsible for the cleavage of major core proteins. The protein is Metalloendopeptidase OPG085 (OPG085) of Homo sapiens (Human).